Here is a 429-residue protein sequence, read N- to C-terminus: Glutamate-1-semialdehyde 2,1-aminomutase 2 (429 aa).

Lys-268 is modified (N6-(pyridoxal phosphate)lysine).

The protein belongs to the class-III pyridoxal-phosphate-dependent aminotransferase family. HemL subfamily. In terms of assembly, homodimer. Pyridoxal 5'-phosphate is required as a cofactor.

The protein resides in the cytoplasm. It catalyses the reaction (S)-4-amino-5-oxopentanoate = 5-aminolevulinate. Its pathway is porphyrin-containing compound metabolism; protoporphyrin-IX biosynthesis; 5-aminolevulinate from L-glutamyl-tRNA(Glu): step 2/2. The sequence is that of Glutamate-1-semialdehyde 2,1-aminomutase 2 from Staphylococcus carnosus (strain TM300).